Reading from the N-terminus, the 231-residue chain is 7-cyano-7-deazaguanine synthase (231 aa).

8-18 (FSGGQDSTTCL) lines the ATP pocket. 4 residues coordinate Zn(2+): cysteine 188, cysteine 197, cysteine 200, and cysteine 203.

This sequence belongs to the QueC family. The cofactor is Zn(2+).

It carries out the reaction 7-carboxy-7-deazaguanine + NH4(+) + ATP = 7-cyano-7-deazaguanine + ADP + phosphate + H2O + H(+). The protein operates within purine metabolism; 7-cyano-7-deazaguanine biosynthesis. Its function is as follows. Catalyzes the ATP-dependent conversion of 7-carboxy-7-deazaguanine (CDG) to 7-cyano-7-deazaguanine (preQ(0)). In Escherichia coli (strain SE11), this protein is 7-cyano-7-deazaguanine synthase.